The following is a 483-amino-acid chain: Chromosomal replication initiator protein DnaA (483 aa).

Positions methionine 1–arginine 71 are domain I, interacts with DnaA modulators. Positions arginine 71–serine 145 are domain II. The domain III, AAA+ region stretch occupies residues arginine 146–alanine 362. The ATP site is built by glycine 190, glycine 192, lysine 193, and threonine 194. The interval arginine 363–glycine 483 is domain IV, binds dsDNA.

It belongs to the DnaA family. Oligomerizes as a right-handed, spiral filament on DNA at oriC.

The protein resides in the cytoplasm. Functionally, plays an essential role in the initiation and regulation of chromosomal replication. ATP-DnaA binds to the origin of replication (oriC) to initiate formation of the DNA replication initiation complex once per cell cycle. Binds the DnaA box (a 9 base pair repeat at the origin) and separates the double-stranded (ds)DNA. Forms a right-handed helical filament on oriC DNA; dsDNA binds to the exterior of the filament while single-stranded (ss)DNA is stabiized in the filament's interior. The ATP-DnaA-oriC complex binds and stabilizes one strand of the AT-rich DNA unwinding element (DUE), permitting loading of DNA polymerase. After initiation quickly degrades to an ADP-DnaA complex that is not apt for DNA replication. Binds acidic phospholipids. The protein is Chromosomal replication initiator protein DnaA of Bordetella avium (strain 197N).